We begin with the raw amino-acid sequence, 126 residues long: Aspartate 1-decarboxylase (126 aa).

The active-site Schiff-base intermediate with substrate; via pyruvic acid is Ser25. Position 25 is a pyruvic acid (Ser) (Ser25). Thr57 is a binding site for substrate. The active-site Proton donor is the Tyr58. 73–75 (GAA) contacts substrate.

Belongs to the PanD family. As to quaternary structure, heterooctamer of four alpha and four beta subunits. The cofactor is pyruvate. Is synthesized initially as an inactive proenzyme, which is activated by self-cleavage at a specific serine bond to produce a beta-subunit with a hydroxyl group at its C-terminus and an alpha-subunit with a pyruvoyl group at its N-terminus.

The protein resides in the cytoplasm. It catalyses the reaction L-aspartate + H(+) = beta-alanine + CO2. It participates in cofactor biosynthesis; (R)-pantothenate biosynthesis; beta-alanine from L-aspartate: step 1/1. Catalyzes the pyruvoyl-dependent decarboxylation of aspartate to produce beta-alanine. The protein is Aspartate 1-decarboxylase of Sodalis glossinidius (strain morsitans).